Reading from the N-terminus, the 146-residue chain is Anti-sigma F factor (146 aa).

It belongs to the anti-sigma-factor family.

It carries out the reaction L-seryl-[protein] + ATP = O-phospho-L-seryl-[protein] + ADP + H(+). The catalysed reaction is L-threonyl-[protein] + ATP = O-phospho-L-threonyl-[protein] + ADP + H(+). In terms of biological role, binds to sigma F and blocks its ability to form an RNA polymerase holoenzyme (E-sigma F). Phosphorylates SpoIIAA on a serine residue. This phosphorylation may enable SpoIIAA to act as an anti-anti-sigma factor that counteracts SpoIIAB and thus releases sigma F from inhibition. The chain is Anti-sigma F factor from Geobacillus thermodenitrificans (strain NG80-2).